A 244-amino-acid polypeptide reads, in one-letter code: Ethylene-responsive transcription factor 1 (244 aa).

The segment at residues 106–164 (HYRGVRQRPWGKFAAEIRDPAKNGARVWLGTYESAEEAALAYGKAAFRMRGTKALLNFP) is a DNA-binding region (AP2/ERF). The segment covering 186–198 (SASSSVSSASESG) has biased composition (low complexity). The tract at residues 186–214 (SASSSVSSASESGSPKRRRKGVAAKQAEL) is disordered.

Belongs to the ethylene-response factor family. Class 1 subfamily. As to expression, present in stems.

It is found in the nucleus. Functionally, involved in the regulation of gene expression during fruit ripening, by stress factors and by components of stress signal transduction pathways. Transcription factor that binds to the GCC-box pathogenesis-related promoter element. Probably acts as a transcriptional activator and may be involved in disease resistance pathways. This chain is Ethylene-responsive transcription factor 1 (ERF1), found in Solanum lycopersicum (Tomato).